We begin with the raw amino-acid sequence, 279 residues long: MADS-box transcription factor PHERES 1 (279 aa).

Positions 1–60 (MRGKMKLSFIENDSVRKTTFTKRKKGMLKKFNELVTLCGVDACAVIRSPYNSIQEPWPSR) constitute an MADS-box domain.

In terms of assembly, interacts with AGL61/DIANA and AGL62. Male gametophyte, embryo and endosperm.

It is found in the nucleus. Functionally, probable transcription factor involved in the development of gametophytes and seeds. This is MADS-box transcription factor PHERES 1 (PHE1) from Arabidopsis thaliana (Mouse-ear cress).